A 571-amino-acid polypeptide reads, in one-letter code: PHD and RING finger domain-containing protein C126.07c (571 aa).

An RING-type 1; atypical zinc finger spans residues Cys-18–Arg-79. A PHD-type zinc finger spans residues Thr-122–Leu-170. The RING-type 2; degenerate zinc-finger motif lies at Cys-125–Val-168. Positions Ala-305–Pro-324 are enriched in polar residues. Residues Ala-305–Ser-377 are disordered. Positions Arg-346 to Ile-356 are enriched in basic residues. The span at Ser-359 to Ser-377 shows a compositional bias: polar residues.

The protein localises to the cytoplasm. The protein resides in the nucleus. The protein is PHD and RING finger domain-containing protein C126.07c of Schizosaccharomyces pombe (strain 972 / ATCC 24843) (Fission yeast).